The primary structure comprises 267 residues: Alkaline ceramidase 3 (267 aa).

Residues 1 to 33 (MAPAADREGYWGPTTSTLDWCEENYSVTWYIAE) are Cytoplasmic-facing. Ca(2+) contacts are provided by aspartate 19, tryptophan 20, glutamate 22, asparagine 24, and glutamate 33. The helical transmembrane segment at 34–55 (FWNTVSNLIMIIPPMFGAVQSV) threads the bilayer. At 56 to 61 (RDGLEK) the chain is on the lumenal side. Residues 62-82 (RYIASYLALTVVGMGSWCFHM) traverse the membrane as a helical segment. Histidine 81 provides a ligand contact to Zn(2+). Over 83–87 (TLKYE) the chain is Cytoplasmic. Residues 88-108 (MQLLDELPMIYSCCIFVYCMF) form a helical membrane-spanning segment. Over 109 to 118 (ECFKIKNSVN) the chain is Lumenal. A helical transmembrane segment spans residues 119-139 (YHLLFTLVLFSLIVTTVYLKV). Residues 140–141 (KE) are Cytoplasmic-facing. A helical transmembrane segment spans residues 142 to 162 (PIFHQVMYGMLVFTLVLRSIY). The Lumenal segment spans residues 163–173 (IVTWVYPWLRG). A helical membrane pass occupies residues 174 to 194 (LGYTSLGIFLLGFLFWNIDNI). Residues 195–215 (FCESLRNFRKKVPPIIGITTQ) lie on the Cytoplasmic side of the membrane. A helical membrane pass occupies residues 216-236 (FHAWWHILTGLGSYLHILFSL). Zn(2+) contacts are provided by histidine 217 and histidine 221. The Lumenal segment spans residues 237-267 (YTRTLYLRYRPKVKFLFGIWPVILFEPLRKH).

This sequence belongs to the alkaline ceramidase family. Requires Zn(2+) as cofactor. In terms of tissue distribution, ubiquitously expressed. Highly expressed in placenta. Expressed in erythrocytes.

It is found in the endoplasmic reticulum membrane. The protein localises to the golgi apparatus membrane. The enzyme catalyses an N-acyl-(4R)-4-hydroxysphinganine + H2O = (4R)-hydroxysphinganine + a fatty acid. It catalyses the reaction N-(5Z,8Z,11Z,14Z-eicosatetraenoyl)-sphing-4-enine + H2O = sphing-4-enine + (5Z,8Z,11Z,14Z)-eicosatetraenoate. The catalysed reaction is N-(5Z,8Z,11Z,14Z-eicosatetraenoyl)-sphinganine + H2O = sphinganine + (5Z,8Z,11Z,14Z)-eicosatetraenoate. It carries out the reaction N-(5Z,8Z,11Z,14Z-eicosatetraenoyl)-(4R)-hydroxysphinganine + H2O = (4R)-hydroxysphinganine + (5Z,8Z,11Z,14Z)-eicosatetraenoate. The enzyme catalyses N-(11Z-eicosenoyl)-sphing-4-enine + H2O = (11Z)-eicosenoate + sphing-4-enine. It catalyses the reaction N-(11Z-eicosenoyl)-sphinganine + H2O = (11Z)-eicosenoate + sphinganine. The catalysed reaction is N-(11Z-eicosenoyl)-(4R)-hydroxysphinganine + H2O = (11Z)-eicosenoate + (4R)-hydroxysphinganine. It carries out the reaction N-(9Z-octadecenoyl)-sphing-4-enine + H2O = sphing-4-enine + (9Z)-octadecenoate. The enzyme catalyses N-(9Z-octadecenoyl)-sphinganine + H2O = sphinganine + (9Z)-octadecenoate. It catalyses the reaction N-(9Z-octadecenoyl)-(4R)-hydroxysphinganine + H2O = (4R)-hydroxysphinganine + (9Z)-octadecenoate. The catalysed reaction is an N-acylsphing-4-enine + H2O = sphing-4-enine + a fatty acid. It carries out the reaction an N-acylsphinganine + H2O = sphinganine + a fatty acid. It participates in lipid metabolism; sphingolipid metabolism. Its activity is regulated as follows. Activated by 5 mM Ca(2+) and inhibited by 5 mM Zn(2+). Functionally, endoplasmic reticulum and Golgi ceramidase that catalyzes the hydrolysis of unsaturated long-chain C18:1-, C20:1- and C20:4-ceramides, dihydroceramides and phytoceramides into sphingoid bases like sphingosine and free fatty acids at alkaline pH. Ceramides, sphingosine, and its phosphorylated form sphingosine-1-phosphate are bioactive lipids that mediate cellular signaling pathways regulating several biological processes including cell proliferation, apoptosis and differentiation. Controls the generation of sphingosine in erythrocytes, and thereby sphingosine-1-phosphate in plasma. Through the regulation of ceramides and sphingosine-1-phosphate homeostasis in the brain may play a role in neurons survival and function. By regulating the levels of pro-inflammatory ceramides in immune cells and tissues, may modulate the inflammatory response. The polypeptide is Alkaline ceramidase 3 (ACER3) (Homo sapiens (Human)).